Reading from the N-terminus, the 105-residue chain is Pyrimidine/purine nucleoside phosphorylase (105 aa).

This sequence belongs to the nucleoside phosphorylase PpnP family.

It catalyses the reaction a purine D-ribonucleoside + phosphate = a purine nucleobase + alpha-D-ribose 1-phosphate. The enzyme catalyses adenosine + phosphate = alpha-D-ribose 1-phosphate + adenine. The catalysed reaction is cytidine + phosphate = cytosine + alpha-D-ribose 1-phosphate. It carries out the reaction guanosine + phosphate = alpha-D-ribose 1-phosphate + guanine. It catalyses the reaction inosine + phosphate = alpha-D-ribose 1-phosphate + hypoxanthine. The enzyme catalyses thymidine + phosphate = 2-deoxy-alpha-D-ribose 1-phosphate + thymine. The catalysed reaction is uridine + phosphate = alpha-D-ribose 1-phosphate + uracil. It carries out the reaction xanthosine + phosphate = alpha-D-ribose 1-phosphate + xanthine. Its function is as follows. Catalyzes the phosphorolysis of diverse nucleosides, yielding D-ribose 1-phosphate and the respective free bases. Can use uridine, adenosine, guanosine, cytidine, thymidine, inosine and xanthosine as substrates. Also catalyzes the reverse reactions. This chain is Pyrimidine/purine nucleoside phosphorylase, found in Cupriavidus pinatubonensis (strain JMP 134 / LMG 1197) (Cupriavidus necator (strain JMP 134)).